The sequence spans 265 residues: Capsule polysaccharide export inner-membrane protein BexB (265 aa).

Transmembrane regions (helical) follow at residues 37-57 (IGFFWLFVEPLLMTFFIVMMW), 64-84 (KFSTLNMIAFVMTGYPMAMMW), 118-138 (LLEVAGASIAQILFMAILVMI), 151-171 (LIAWFLMAMFAFGLGLIICAI), 178-198 (FGKIWGTLSFVLLPISGAFFF), and 235-255 (ESIGFLVVSDLALLLLGLVMV). An ABC transmembrane type-2 domain is found at 37–258 (IGFFWLFVEP…LLGLVMVKNF (222 aa)).

Belongs to the ABC-2 integral membrane protein family.

Its subcellular location is the cell inner membrane. Functionally, may form an ATP-driven capsule polysaccharide export apparatus, in association with the BexA, BexC and BexD proteins. The chain is Capsule polysaccharide export inner-membrane protein BexB (bexB) from Haemophilus influenzae.